Reading from the N-terminus, the 469-residue chain is Argininosuccinate lyase (469 aa).

Belongs to the lyase 1 family. Argininosuccinate lyase subfamily.

Its subcellular location is the cytoplasm. The enzyme catalyses 2-(N(omega)-L-arginino)succinate = fumarate + L-arginine. It participates in amino-acid biosynthesis; L-arginine biosynthesis; L-arginine from L-ornithine and carbamoyl phosphate: step 3/3. The protein is Argininosuccinate lyase of Burkholderia thailandensis (strain ATCC 700388 / DSM 13276 / CCUG 48851 / CIP 106301 / E264).